Reading from the N-terminus, the 299-residue chain is 4-hydroxybenzoate octaprenyltransferase (299 aa).

The next 7 membrane-spanning stretches (helical) occupy residues Ile34 to Leu54, Leu57 to Ile77, Leu108 to Leu128, Trp163 to Leu183, Phe221 to Asp241, Asp245 to Phe265, and Phe277 to Ala297.

It belongs to the UbiA prenyltransferase family. Requires Mg(2+) as cofactor.

The protein localises to the cell inner membrane. It carries out the reaction all-trans-octaprenyl diphosphate + 4-hydroxybenzoate = 4-hydroxy-3-(all-trans-octaprenyl)benzoate + diphosphate. Its pathway is cofactor biosynthesis; ubiquinone biosynthesis. Catalyzes the prenylation of para-hydroxybenzoate (PHB) with an all-trans polyprenyl group. Mediates the second step in the final reaction sequence of ubiquinone-8 (UQ-8) biosynthesis, which is the condensation of the polyisoprenoid side chain with PHB, generating the first membrane-bound Q intermediate 3-octaprenyl-4-hydroxybenzoate. The sequence is that of 4-hydroxybenzoate octaprenyltransferase from Xanthomonas oryzae pv. oryzae (strain MAFF 311018).